Reading from the N-terminus, the 313-residue chain is Ribosomal RNA small subunit methyltransferase H (313 aa).

Residues 35-37, Asp55, Phe79, Asp100, and Gln107 contribute to the S-adenosyl-L-methionine site; that span reads GGH.

The protein belongs to the methyltransferase superfamily. RsmH family.

It localises to the cytoplasm. The enzyme catalyses cytidine(1402) in 16S rRNA + S-adenosyl-L-methionine = N(4)-methylcytidine(1402) in 16S rRNA + S-adenosyl-L-homocysteine + H(+). Specifically methylates the N4 position of cytidine in position 1402 (C1402) of 16S rRNA. This Burkholderia pseudomallei (strain K96243) protein is Ribosomal RNA small subunit methyltransferase H.